A 402-amino-acid chain; its full sequence is MNEFPVVLVINCGSSSIKFSVLNASDCEVLMSGIADGINSENAFLSVNGGEPAPLAHHSYEGALKAIAFELEKRNLNDNVALIGHRIAHGGSIFTESAIITDEVIDNIRRVSPLAPLHNYANLSGIESAQQLFPGVTQVAVFDTSFHQTMAPEAYLYGLPWKYYEELGVRRYGFHGTSHRYVSQRAHSLLNLAEDDSGLVVAHLGNGASICAVRNGQSVDTSMGMTPLEGLMMGTRSGDVDFGAMSWVASQTNQSLGDLERVVNKESGLLGISGLSSDLRVLEKAWHEGHERAQLAIKTFVHRIARHIAGHAASLHRLDGIIFTGGIGENSSLIRRLVMEHLAVLGVEIDTEMNNRSNSFGERIVSSENARVICAVIPTNEEKMIALDAIHLGKVNAPAEFA.

Positions 11 and 18 each coordinate ATP. Asn11 lines the Mg(2+) pocket. Arg86 serves as a coordination point for substrate. Asp143 (proton donor/acceptor) is an active-site residue. Residues His175, 203 to 207 (HLGNG), 278 to 280 (DLR), and 326 to 330 (GIGEN) each bind ATP.

It belongs to the acetokinase family. TdcD subfamily. In terms of assembly, homodimer. It depends on Mg(2+) as a cofactor.

It carries out the reaction propanoate + ATP = propanoyl phosphate + ADP. It functions in the pathway amino-acid degradation; L-threonine degradation via propanoate pathway; propanoate from L-threonine: step 4/4. Functionally, catalyzes the conversion of propionyl phosphate and ADP to propionate and ATP. The chain is Propionate kinase from Escherichia coli O6:H1 (strain CFT073 / ATCC 700928 / UPEC).